The chain runs to 469 residues: Serine carboxypeptidase-like 41 (469 aa).

The signal sequence occupies residues 1 to 20; sequence MAIVSLRDVAMVMVTVQVFA. Intrachain disulfides connect cysteine 83/cysteine 342, cysteine 243/cysteine 260, and cysteine 285/cysteine 310. The N-linked (GlcNAc...) asparagine glycan is linked to asparagine 134. Serine 175 is an active-site residue. N-linked (GlcNAc...) asparagine glycosylation is present at asparagine 255. N-linked (GlcNAc...) asparagine glycans are attached at residues asparagine 331 and asparagine 347. Catalysis depends on residues aspartate 379 and histidine 436. N-linked (GlcNAc...) asparagine glycosylation is present at asparagine 461.

This sequence belongs to the peptidase S10 family. As to expression, expressed in flowers.

The protein resides in the secreted. Functionally, probable carboxypeptidase. In Arabidopsis thaliana (Mouse-ear cress), this protein is Serine carboxypeptidase-like 41 (SCPL41).